Reading from the N-terminus, the 234-residue chain is Sugar fermentation stimulation protein homolog (234 aa).

This sequence belongs to the SfsA family.

This chain is Sugar fermentation stimulation protein homolog, found in Enterobacter sp. (strain 638).